Here is a 673-residue protein sequence, read N- to C-terminus: UvrABC system protein B (673 aa).

The 158-residue stretch at E26–R183 folds into the Helicase ATP-binding domain. G39–T46 lines the ATP pocket. Positions Y92 to V115 match the Beta-hairpin motif. Positions Q431–L597 constitute a Helicase C-terminal domain. In terms of domain architecture, UVR spans Q633 to L668.

It belongs to the UvrB family. As to quaternary structure, forms a heterotetramer with UvrA during the search for lesions. Interacts with UvrC in an incision complex.

It is found in the cytoplasm. The UvrABC repair system catalyzes the recognition and processing of DNA lesions. A damage recognition complex composed of 2 UvrA and 2 UvrB subunits scans DNA for abnormalities. Upon binding of the UvrA(2)B(2) complex to a putative damaged site, the DNA wraps around one UvrB monomer. DNA wrap is dependent on ATP binding by UvrB and probably causes local melting of the DNA helix, facilitating insertion of UvrB beta-hairpin between the DNA strands. Then UvrB probes one DNA strand for the presence of a lesion. If a lesion is found the UvrA subunits dissociate and the UvrB-DNA preincision complex is formed. This complex is subsequently bound by UvrC and the second UvrB is released. If no lesion is found, the DNA wraps around the other UvrB subunit that will check the other stand for damage. In Salmonella agona (strain SL483), this protein is UvrABC system protein B.